A 633-amino-acid polypeptide reads, in one-letter code: Pesticidal crystal protein Cry2Ab (633 aa).

The protein belongs to the delta endotoxin family.

Promotes colloidosmotic lysis by binding to the midgut epithelial cells of lepidopteran (Manduca sexta) larvae. This chain is Pesticidal crystal protein Cry2Ab (cry2Ab), found in Bacillus thuringiensis subsp. kurstaki.